A 372-amino-acid chain; its full sequence is Delta-type opioid receptor (372 aa).

Topologically, residues 1 to 47 (MEPAPSAGAELQPPLFANASDAYPSACPSAGANASGPPGARSASSLA) are extracellular. N-linked (GlcNAc...) asparagine glycosylation is found at N18 and N33. A helical membrane pass occupies residues 48–75 (LAIAITALYSAVCAVGLLGNVLVMFGIV). Residues 76–85 (RYTKMKTATN) lie on the Cytoplasmic side of the membrane. A helical membrane pass occupies residues 86-110 (IYIFNLALADALATSTLPFQSAKYL). At 111–122 (METWPFGELLCK) the chain is on the extracellular side. An intrachain disulfide couples C121 to C198. Residues 123-144 (AVLSIDYYNMFTSIFTLTMMSV) traverse the membrane as a helical segment. The Cytoplasmic portion of the chain corresponds to 145–163 (DRYIAVCHPVKALDFRTPA). Residues 164 to 186 (KAKLINICIWVLASGVGVPIMVM) traverse the membrane as a helical segment. The Extracellular portion of the chain corresponds to 187-206 (AVTRPRDGAVVCMLQFPSPS). Residues 207-238 (WYWDTVTKICVFLFAFVVPILIITVCYGLMLL) form a helical membrane-spanning segment. The Cytoplasmic segment spans residues 239–261 (RLRSVRLLSGSKEKDRSLRRITR). Residues 262–284 (MVLVVVGAFVVCWAPIHIFVIVW) form a helical membrane-spanning segment. Residues 285-299 (TLVDIDRRDPLVVAA) lie on the Extracellular side of the membrane. A helical transmembrane segment spans residues 300-321 (LHLCIALGYANSSLNPVLYAFL). At 322–372 (DENFKRCFRQLCRKPCGRPDPSSFSRAREATARERVTACTPSDGPGGGAAA) the chain is on the cytoplasmic side. C333 carries S-palmitoyl cysteine lipidation. The tract at residues 340–372 (PDPSSFSRAREATARERVTACTPSDGPGGGAAA) is disordered. Residues 347 to 357 (RAREATARERV) are compositionally biased toward basic and acidic residues.

This sequence belongs to the G-protein coupled receptor 1 family. In terms of assembly, may form homooligomers. Forms a heterodimer with OPRM1. Interacts with GPRASP1. Interacts with RTP4; the interaction promotes cell surface localization of the OPRD1-OPRM1 heterodimer. In terms of processing, N-glycosylated. Ubiquitinated. A basal ubiquitination seems not to be related to degradation. Ubiquitination is increased upon formation of OPRM1:OPRD1 oligomers leading to proteasomal degradation; the ubiquitination is diminished by RTP4. Detected in oocytes (at protein level). Detected in brain cortex, hypothalamus, hippocampus and olfactory bulb. Detected in oocytes.

The protein localises to the cell membrane. Its function is as follows. G-protein coupled receptor that functions as a receptor for endogenous enkephalins and for a subset of other opioids. Ligand binding causes a conformation change that triggers signaling via guanine nucleotide-binding proteins (G proteins) and modulates the activity of down-stream effectors, such as adenylate cyclase. Signaling leads to the inhibition of adenylate cyclase activity. Inhibits neurotransmitter release by reducing calcium ion currents and increasing potassium ion conductance. Plays a role in the perception of pain and in opiate-mediated analgesia. Plays a role in developing analgesic tolerance to morphine. The polypeptide is Delta-type opioid receptor (OPRD1) (Homo sapiens (Human)).